The chain runs to 639 residues: Envelope glycoprotein (639 aa).

The first 34 residues, 1–34 (MESPTHPKPSKDKTFPWNLVFLVGILFQIDMGMA), serve as a signal peptide directing secretion. Over 35–583 (NPSPHQVYNV…FNKSPWFTTL (549 aa)) the chain is Extracellular. N-linked (GlcNAc...) asparagine; by host glycans are attached at residues N43 and N58. 2 disulfide bridges follow: C122–C144 and C136–C149. The tract at residues 232–278 (QAMGPNLVLPDQKPPSRQSQTKSKVTTQRPQITSSTPRSVASATMGP) is disordered. Residues 246–273 (PSRQSQTKSKVTTQRPQITSSTPRSVAS) show a composition bias toward polar residues. N-linked (GlcNAc...) asparagine; by host glycosylation is found at N299 and N304. 3 cysteine pairs are disulfide-bonded: C309–C312, C309–C536, and C528–C535. Positions 309–312 (CWLC) match the CXXC motif. Residues N328, N331, N387, and N407 are each glycosylated (N-linked (GlcNAc...) asparagine; by host). Residues 445-465 (ISLTVALMLGGLTVGGIAAGV) form a fusion peptide region. Coiled-coil stretches lie at residues 473–522 (LETA…ILFL) and 532–568 (KEEC…SQQG). Residues 511–527 (LQNRRGLDILFLQEGGL) are immunosuppression. Residues 528 to 536 (CAALKEECC) carry the CX6CC motif. Residues 584-604 (ISSIMGPLLILLLILLLGPCI) form a helical membrane-spanning segment. C603 carries the S-palmitoyl cysteine; by host lipid modification. At 605-639 (LNRLVQFVKDRISVVQALILTQQYQQIQQYDSDRP) the chain is on the cytoplasmic side.

As to quaternary structure, the mature envelope protein (Env) consists of a trimer of SU-TM heterodimers attached by a labile interchain disulfide bond. Specific enzymatic cleavages in vivo yield mature proteins. Envelope glycoproteins are synthesized as an inactive precursor that is N-glycosylated and processed likely by host cell furin or by a furin-like protease in the Golgi to yield the mature SU and TM proteins. The cleavage site between SU and TM requires the minimal sequence [KR]-X-[KR]-R. The R-peptide is released from the C-terminus of the cytoplasmic tail of the TM protein upon particle formation as a result of proteolytic cleavage by the viral protease. Cleavage of this peptide is required for TM to become fusogenic. In terms of processing, the CXXC motif is highly conserved across a broad range of retroviral envelope proteins. It is thought to participate in the formation of a labile disulfide bond possibly with the CX6CC motif present in the transmembrane protein. Isomerization of the intersubunit disulfide bond to an SU intrachain disulfide bond is thought to occur upon receptor recognition in order to allow membrane fusion. Post-translationally, the transmembrane protein is palmitoylated. The R-peptide is palmitoylated.

It is found in the virion membrane. It localises to the host cell membrane. Its function is as follows. The surface protein (SU) attaches the virus to the host cell by binding to its receptor. This interaction triggers the refolding of the transmembrane protein (TM) and is thought to activate its fusogenic potential by unmasking its fusion peptide. Fusion occurs at the host cell plasma membrane. Functionally, the transmembrane protein (TM) acts as a class I viral fusion protein. Under the current model, the protein has at least 3 conformational states: pre-fusion native state, pre-hairpin intermediate state, and post-fusion hairpin state. During viral and target cell membrane fusion, the coiled coil regions (heptad repeats) assume a trimer-of-hairpins structure, positioning the fusion peptide in close proximity to the C-terminal region of the ectodomain. The formation of this structure appears to drive apposition and subsequent fusion of viral and target cell membranes. Membranes fusion leads to delivery of the nucleocapsid into the cytoplasm. This is Envelope glycoprotein (env) from Feline leukemia virus (strain C/Sarma).